The chain runs to 280 residues: Nuclear egress protein 1 (280 aa).

The CCCH-type zinc finger occupies 86–203; it reads CLTLSPYGHS…YIIFTSLTLH (118 aa).

This sequence belongs to the herpesviridae NEC1 protein family. In terms of assembly, forms a heterohexameric complex with NEC2. Interacts with capsid vertex specific component 2/CVC2; this interaction directs the capsid to the host inner nuclear membrane to initiate budding. In terms of processing, phosphorylated at serine residues in the N-terminus. This phosphorylation regulates the localization within the inner nuclear membrane.

The protein localises to the host nucleus inner membrane. Functionally, plays an essential role in virion nuclear egress, the first step of virion release from infected cell. Within the host nucleus, NEC1 interacts with the newly formed capsid through the vertexes and directs it to the inner nuclear membrane by associating with NEC2. Induces the budding of the capsid at the inner nuclear membrane as well as its envelopment into the perinuclear space. There, the NEC1/NEC2 complex promotes the fusion of the enveloped capsid with the outer nuclear membrane and the subsequent release of the viral capsid into the cytoplasm where it will reach the secondary budding sites in the host Golgi or trans-Golgi network. In Alcelaphine herpesvirus 1 (strain C500) (AlHV-1), this protein is Nuclear egress protein 1.